Reading from the N-terminus, the 377-residue chain is uncharacterized protein (377 aa).

32–39 (GPINSGKT) provides a ligand contact to ATP.

The protein belongs to the archaeal ATPase family.

This is an uncharacterized protein from Methanocaldococcus jannaschii (strain ATCC 43067 / DSM 2661 / JAL-1 / JCM 10045 / NBRC 100440) (Methanococcus jannaschii).